Consider the following 149-residue polypeptide: Oligosaccharyltransferase complex subunit OSTC (149 aa).

The Cytoplasmic portion of the chain corresponds to 1–32; the sequence is METLYRVPFLVLECPNLKLKKPPWVHMPSAMT. Residues 33 to 53 form a helical membrane-spanning segment; that stretch reads VYALVVVSYFLITGGIIYDVI. The Extracellular portion of the chain corresponds to 54–83; it reads VEPPSVGSMTDEHGHQRPVAFLAYRVNGQY. A helical transmembrane segment spans residues 84–104; it reads IMEGLASSFLFTMGGLGFIIL. At 105–117 the chain is on the cytoplasmic side; that stretch reads DRSNAPNIPKLNR. The helical transmembrane segment at 118-138 threads the bilayer; the sequence is FLLLFIGFVCVLLSFFMARVF. At 139-149 the chain is on the extracellular side; sequence MRMKLPGYLMG.

The protein belongs to the OSTC family. In terms of assembly, component of STT3A-containing oligosaccharyl transferase (OST-A) complex. STT3A-containing complex assembly occurs through the formation of 3 subcomplexes. Subcomplex 1 contains RPN1 and TMEM258, subcomplex 2 contains the STT3A-specific subunits STT3A, DC2/OSTC, and KCP2 as well as the core subunit OST4, and subcomplex 3 contains RPN2, DAD1, and OST48. The OST-A complex can form stable complexes with the Sec61 complex or with both the Sec61 and TRAP complexes. Interacts with PSEN1 and NCSTN; indicative for an association with the gamma-secretase complex.

The protein localises to the endoplasmic reticulum. Its subcellular location is the membrane. It participates in protein modification; protein glycosylation. Subunit of STT3A-containing oligosaccharyl transferase (OST-A) complex that catalyzes the initial transfer of a defined glycan (Glc(3)Man(9)GlcNAc(2) in eukaryotes) from the lipid carrier dolichol-pyrophosphate to an asparagine residue within an Asn-X-Ser/Thr consensus motif in nascent polypeptide chains, the first step in protein N-glycosylation. N-glycosylation occurs cotranslationally and the complex associates with the Sec61 complex at the channel-forming translocon complex that mediates protein translocation across the endoplasmic reticulum (ER). Within the OST-A complex, acts as an adapter that anchors the OST-A complex to the Sec61 complex. May be involved in N-glycosylation of APP (amyloid-beta precursor protein). Can modulate gamma-secretase cleavage of APP by enhancing endoprotelysis of PSEN1. This Canis lupus familiaris (Dog) protein is Oligosaccharyltransferase complex subunit OSTC.